The following is a 384-amino-acid chain: Lipid-A-disaccharide synthase 1 (384 aa).

The protein belongs to the LpxB family.

The catalysed reaction is a lipid X + a UDP-2-N,3-O-bis[(3R)-3-hydroxyacyl]-alpha-D-glucosamine = a lipid A disaccharide + UDP + H(+). Its pathway is bacterial outer membrane biogenesis; LPS lipid A biosynthesis. In terms of biological role, condensation of UDP-2,3-diacylglucosamine and 2,3-diacylglucosamine-1-phosphate to form lipid A disaccharide, a precursor of lipid A, a phosphorylated glycolipid that anchors the lipopolysaccharide to the outer membrane of the cell. This chain is Lipid-A-disaccharide synthase 1, found in Legionella pneumophila subsp. pneumophila (strain Philadelphia 1 / ATCC 33152 / DSM 7513).